The following is a 916-amino-acid chain: Ubiquitin carboxyl-terminal hydrolase 20 (916 aa).

The UBP-type zinc finger occupies 6-111 (DLCPHLDCIG…SSSARLSEQD (106 aa)). Residues cysteine 8, histidine 10, cysteine 30, cysteine 33, cysteine 43, cysteine 48, cysteine 53, histidine 60, histidine 64, histidine 70, cysteine 83, and cysteine 86 each coordinate Zn(2+). Serine 112, serine 132, and serine 134 each carry phosphoserine. Positions 145–687 (TGMKNLGNSC…EAYVLFYRKS (543 aa)) constitute a USP domain. The active-site Nucleophile is cysteine 154. Positions 258–420 (LTDARDSDSS…PPRASPVRMG (163 aa)) are disordered. Position 259 is a phosphothreonine (threonine 259). The segment covering 260-280 (DARDSDSSDTDERRDGDRSPS) has biased composition (basic and acidic residues). At serine 306 the chain carries Phosphoserine. The segment covering 317–333 (EAGRAISEKERMKDRKF) has biased composition (basic and acidic residues). At serine 369 the chain carries Phosphoserine. Phosphothreonine is present on threonine 378. Phosphoserine is present on residues serine 410 and serine 415. Histidine 645 (proton acceptor) is an active-site residue. DUSP domains follow at residues 689 to 782 (EEAM…LYVC) and 791 to 894 (ALAK…RQSV).

It belongs to the peptidase C19 family. USP20/USP33 subfamily. In terms of assembly, interacts with VHL, leading to its ubiquitination and subsequent degradation. Interacts with CCP110. Interacts with DIO2. Interacts with HIF1A. Interacts with ADRB2. Interacts with USP18. Post-translationally, ubiquitinated via a VHL-dependent pathway for proteasomal degradation.

Its subcellular location is the cytoplasm. The protein localises to the endoplasmic reticulum. It is found in the perinuclear region. The protein resides in the cytoskeleton. It localises to the microtubule organizing center. Its subcellular location is the centrosome. The enzyme catalyses Thiol-dependent hydrolysis of ester, thioester, amide, peptide and isopeptide bonds formed by the C-terminal Gly of ubiquitin (a 76-residue protein attached to proteins as an intracellular targeting signal).. In terms of biological role, deubiquitinating enzyme that plays a role in many cellular processes including autophagy, cellular antiviral response or membrane protein biogenesis. Attenuates TLR4-mediated NF-kappa-B signaling by cooperating with beta-arrestin-2/ARRB2 and inhibiting TRAF6 autoubiquitination. Promotes cellular antiviral responses by deconjugating 'Lys-33' and 'Lys-48'-linked ubiquitination of STING1 leading to its stabilization. Plays an essential role in autophagy induction by regulating the ULK1 stability through deubiquitination of ULK1. Acts as a positive regulator for NF-kappa-B activation by TNF-alpha through deubiquitinating 'Lys-48'-linked polyubiquitination of SQSTM1, leading to its increased stability. Acts as a regulator of G-protein coupled receptor (GPCR) signaling by mediating the deubiquitination beta-2 adrenergic receptor (ADRB2). Plays a central role in ADRB2 recycling and resensitization after prolonged agonist stimulation by constitutively binding ADRB2, mediating deubiquitination of ADRB2 and inhibiting lysosomal trafficking of ADRB2. Upon dissociation, it is probably transferred to the translocated beta-arrestins, possibly leading to beta-arrestins deubiquitination and disengagement from ADRB2. This suggests the existence of a dynamic exchange between the ADRB2 and beta-arrestins. Deubiquitinates DIO2, thereby regulating thyroid hormone regulation. Deubiquitinates HIF1A, leading to stabilize HIF1A and enhance HIF1A-mediated activity. Deubiquitinates MCL1, a pivotal member of the anti-apoptotic Bcl-2 protein family to regulate its stability. Within the endoplasmic reticulum, participates with USP33 in the rescue of post-translationally targeted membrane proteins that are inappropriately ubiquitinated by the cytosolic protein quality control in the cytosol. This is Ubiquitin carboxyl-terminal hydrolase 20 (Usp20) from Mus musculus (Mouse).